The primary structure comprises 1115 residues: Disheveled-associated activator of morphogenesis 2 (1115 aa).

One can recognise a GBD/FH3 domain in the interval 40-416; the sequence is GPIPNPEELN…QIVLQDERGV (377 aa). Positions 434-515 form a coiled coil; that stretch reads MLINENEVKQ…ELVARHNESS (82 aa). Disordered stretches follow at residues 510–605 and 655–697; these read RHNE…SHPL and QEGP…SATG. Residues 518-694 form the FH1 domain; the sequence is PVSSPPPPGG…TEKASRSMVS (177 aa). Pro residues predominate over residues 540–583; that stretch reads LPPPPPPLPFDSCPPPPAPPLPPGGPPIPPGAPPCFSSGPPPSH. Positions 595–1042 constitute an FH2 domain; that stretch reads KKRIPQPSHP…DERRARMEFM (448 aa). The DAD domain maps to 1065 to 1095; the sequence is EESGEFDDLVSALRSGEVFDKDLSKFKRNRK.

This sequence belongs to the formin homology family. Interacts with DVL3. Interacts with INF2. In terms of tissue distribution, in early embryogenesis, expression is confined to embryonic ectoderm. Highly dynamic expression in later stages of gastrulation. In early somite stages, detected in posterior node and persists until 9-10 somites have developed when expression is concentrated in the chordoneural hinge. During organogenesis, expressed in the CNS, PNS, liver primordia, limb buds and genital tubercle.

In terms of biological role, key regulator of the Wnt signaling pathway, which is required for various processes during development, such as dorsal patterning, determination of left/right symmetry or myelination in the central nervous system. Acts downstream of Wnt ligands and upstream of beta-catenin (CTNNB1). Required for canonical Wnt signaling pathway during patterning in the dorsal spinal cord by promoting the aggregation of Disheveled (Dvl) complexes, thereby clustering and formation of Wnt receptor signalosomes and potentiating Wnt activity. During dorsal patterning of the spinal cord, inhibits oligodendrocytes differentiation via interaction with PIP5K1A. Also regulates non-canonical Wnt signaling pathway. Acts downstream of PITX2 in the developing gut and is required for left/right asymmetry within dorsal mesentery: affects mesenchymal condensation by lengthening cadherin-based junctions through WNT5A and non-canonical Wnt signaling, inducing polarized condensation in the left dorsal mesentery necessary to initiate gut rotation. Together with DAAM1, required for myocardial maturation and sarcomere assembly. Is a regulator of actin nucleation and elongation, filopodia formation and podocyte migration. In Mus musculus (Mouse), this protein is Disheveled-associated activator of morphogenesis 2.